The following is a 131-amino-acid chain: Small ribosomal subunit protein uS8 (131 aa).

Belongs to the universal ribosomal protein uS8 family. Part of the 30S ribosomal subunit. Contacts proteins S5 and S12.

One of the primary rRNA binding proteins, it binds directly to 16S rRNA central domain where it helps coordinate assembly of the platform of the 30S subunit. In Campylobacter lari (strain RM2100 / D67 / ATCC BAA-1060), this protein is Small ribosomal subunit protein uS8.